The chain runs to 373 residues: Dual-specificity RNA methyltransferase RlmN (373 aa).

The Proton acceptor role is filled by glutamate 94. A Radical SAM core domain is found at glutamate 100–aspartate 339. Cysteines 107 and 344 form a disulfide. Cysteine 114, cysteine 118, and cysteine 121 together coordinate [4Fe-4S] cluster. Residues glycine 168–glutamate 169, serine 200, serine 222–histidine 224, and asparagine 301 each bind S-adenosyl-L-methionine. Cysteine 344 serves as the catalytic S-methylcysteine intermediate.

It belongs to the radical SAM superfamily. RlmN family. [4Fe-4S] cluster is required as a cofactor.

It localises to the cytoplasm. It catalyses the reaction adenosine(2503) in 23S rRNA + 2 reduced [2Fe-2S]-[ferredoxin] + 2 S-adenosyl-L-methionine = 2-methyladenosine(2503) in 23S rRNA + 5'-deoxyadenosine + L-methionine + 2 oxidized [2Fe-2S]-[ferredoxin] + S-adenosyl-L-homocysteine. The enzyme catalyses adenosine(37) in tRNA + 2 reduced [2Fe-2S]-[ferredoxin] + 2 S-adenosyl-L-methionine = 2-methyladenosine(37) in tRNA + 5'-deoxyadenosine + L-methionine + 2 oxidized [2Fe-2S]-[ferredoxin] + S-adenosyl-L-homocysteine. In terms of biological role, specifically methylates position 2 of adenine 2503 in 23S rRNA and position 2 of adenine 37 in tRNAs. m2A2503 modification seems to play a crucial role in the proofreading step occurring at the peptidyl transferase center and thus would serve to optimize ribosomal fidelity. The chain is Dual-specificity RNA methyltransferase RlmN from Shewanella sp. (strain ANA-3).